The sequence spans 327 residues: BarH-like 1 homeobox protein (327 aa).

3 disordered regions span residues 1–90 (MEGS…AQSR), 112–184 (APYS…ARTA), and 305–327 (GASEPPPPLPPLAGVLPRAAQPR). The segment covering 33–54 (RSPLELSPRSESSSDCSSPASP) has biased composition (low complexity). The span at 79 to 90 (QPGQLSAPAQSR) shows a compositional bias: polar residues. Basic and acidic residues-rich tracts occupy residues 133–143 (AAEDFRDKLDK) and 152–166 (SEYKVKEEGDREISS). The segment at residues 178–237 (PRKARTAFTDHQLAQLERSFERQKYLSVQDRMELAASLNLTDTQVKTWYQNRRTKWKRQT) is a DNA-binding region (homeobox). Positions 316–327 (LAGVLPRAAQPR) are enriched in low complexity.

The protein belongs to the BAR homeobox family.

It is found in the nucleus. The chain is BarH-like 1 homeobox protein (BARHL1) from Homo sapiens (Human).